The chain runs to 96 residues: Cytochrome c oxidase assembly factor 3 homolog, mitochondrial (96 aa).

Residues 1-50 (MSSQGEPKPEAQFAKRIDPTKEALTKEQLQFIRQVEMAQWKKKTDKLRGR) are Mitochondrial matrix-facing. Residues 51–73 (NVATGLAIGAVVLGIYGYTFYSV) traverse the membrane as a helical segment. Residues 74 to 96 (SQEKIMDEIDEEAKVRVPKTGAN) lie on the Mitochondrial intermembrane side of the membrane.

This sequence belongs to the COA3 family. Core component of the MITRAC (mitochondrial translation regulation assembly intermediate of cytochrome c oxidase complex) complex.

It is found in the mitochondrion inner membrane. In terms of biological role, core component of the MITRAC (mitochondrial translation regulation assembly intermediate of cytochrome c oxidase complex) complex, that regulates cytochrome c oxidase assembly. MITRAC complexes regulate both translation of mitochondrial encoded components and assembly of nuclear-encoded components imported in mitochondrion. Required for efficient translation of MT-CO1 and mitochondrial respiratory chain complex IV assembly. This is Cytochrome c oxidase assembly factor 3 homolog, mitochondrial (coa3a) from Danio rerio (Zebrafish).